Consider the following 341-residue polypeptide: uncharacterized protein (341 aa).

The tract at residues 125–146 is disordered; the sequence is DTVKHNGSGPRPEQASSHVHYS.

Belongs to the cycloisomerase 2 family.

This is an uncharacterized protein from Lactococcus lactis subsp. cremoris (strain MG1363).